The following is a 173-amino-acid chain: Gamma-crystallin S-1 (173 aa).

Beta/gamma crystallin 'Greek key' domains lie at 2 to 40 and 41 to 83; these read GKII…RVES and DWWV…RMLP. The interval 84-88 is connecting peptide; it reads HTGRS. 2 consecutive Beta/gamma crystallin 'Greek key' domains span residues 89-129 and 130-172; these read YRMR…QVMD and GYWI…RRIM.

The protein belongs to the beta/gamma-crystallin family.

Crystallins are the dominant structural components of the vertebrate eye lens. The protein is Gamma-crystallin S-1 (GS-1) of Chiloscyllium indicum (Slender bamboo shark).